The chain runs to 61 residues: Small ribosomal subunit protein uS14 (61 aa).

Zn(2+) contacts are provided by C24, C27, C40, and C43.

Belongs to the universal ribosomal protein uS14 family. Zinc-binding uS14 subfamily. As to quaternary structure, part of the 30S ribosomal subunit. Contacts proteins S3 and S10. Zn(2+) is required as a cofactor.

Its function is as follows. Binds 16S rRNA, required for the assembly of 30S particles and may also be responsible for determining the conformation of the 16S rRNA at the A site. In Streptococcus equi subsp. zooepidemicus (strain H70), this protein is Small ribosomal subunit protein uS14.